The following is a 143-amino-acid chain: Ribosomal RNA large subunit methyltransferase H (143 aa).

2 residues coordinate S-adenosyl-L-methionine: Leu68 and Gly95.

This sequence belongs to the RNA methyltransferase RlmH family. As to quaternary structure, homodimer.

Its subcellular location is the cytoplasm. It catalyses the reaction pseudouridine(1915) in 23S rRNA + S-adenosyl-L-methionine = N(3)-methylpseudouridine(1915) in 23S rRNA + S-adenosyl-L-homocysteine + H(+). Functionally, specifically methylates the pseudouridine at position 1915 (m3Psi1915) in 23S rRNA. The polypeptide is Ribosomal RNA large subunit methyltransferase H (Mycoplasma mobile (strain ATCC 43663 / 163K / NCTC 11711) (Mesomycoplasma mobile)).